A 453-amino-acid polypeptide reads, in one-letter code: Growth/differentiation factor 9 (453 aa).

The first 25 residues, Met1–Ser25, serve as a signal peptide directing secretion. The propeptide occupies Gln26–Arg318. 5 N-linked (GlcNAc...) asparagine glycosylation sites follow: Asn106, Asn163, Asn236, Asn255, and Asn269. The segment at Ser281–Ala300 is disordered. The N-linked (GlcNAc...) asparagine glycan is linked to Asn337. Disulfide bonds link Cys352–Cys418, Cys381–Cys450, and Cys385–Cys452.

This sequence belongs to the TGF-beta family. As to quaternary structure, homodimer or heterodimer (Potential). But, in contrast to other members of this family, cannot be disulfide-linked. Post-translationally, phosphorylated; phosphorylation is critical for GDF9 function.

It localises to the secreted. In terms of biological role, required for ovarian folliculogenesis. This Bos taurus (Bovine) protein is Growth/differentiation factor 9 (GDF9).